Consider the following 235-residue polypeptide: Ribosomal RNA large subunit methyltransferase E (235 aa).

S-adenosyl-L-methionine contacts are provided by Gly76, Trp78, Asp99, Asp115, and Asp139. Catalysis depends on Lys179, which acts as the Proton acceptor.

This sequence belongs to the class I-like SAM-binding methyltransferase superfamily. RNA methyltransferase RlmE family.

The protein localises to the cytoplasm. It catalyses the reaction uridine(2552) in 23S rRNA + S-adenosyl-L-methionine = 2'-O-methyluridine(2552) in 23S rRNA + S-adenosyl-L-homocysteine + H(+). Its function is as follows. Specifically methylates the uridine in position 2552 of 23S rRNA at the 2'-O position of the ribose in the fully assembled 50S ribosomal subunit. The protein is Ribosomal RNA large subunit methyltransferase E of Rhodopseudomonas palustris (strain BisA53).